The sequence spans 64 residues: Large ribosomal subunit protein bL35 (64 aa).

The segment at 1-25 is disordered; the sequence is MPKMKTHRGAAKRLKKTGTGKLKRA.

This sequence belongs to the bacterial ribosomal protein bL35 family.

The sequence is that of Large ribosomal subunit protein bL35 from Clostridioides difficile (strain 630) (Peptoclostridium difficile).